A 260-amino-acid chain; its full sequence is UPF0246 protein BceJ2315_22780 (260 aa).

This sequence belongs to the UPF0246 family.

The chain is UPF0246 protein BceJ2315_22780 from Burkholderia cenocepacia (strain ATCC BAA-245 / DSM 16553 / LMG 16656 / NCTC 13227 / J2315 / CF5610) (Burkholderia cepacia (strain J2315)).